A 32-amino-acid polypeptide reads, in one-letter code: U3-ctenitoxin-Pk1a (32 aa).

Disulfide bonds link Cys-3/Cys-17, Cys-10/Cys-21, and Cys-16/Cys-30.

The protein belongs to the neurotoxin 17 (21C2) family. Expressed by the venom gland.

The protein localises to the secreted. In terms of biological role, may act as a neurotoxin. This chain is U3-ctenitoxin-Pk1a, found in Phoneutria keyserlingi (Brazilian wandering spider).